The sequence spans 237 residues: Phosphoribosylaminoimidazole-succinocarboxamide synthase (237 aa).

The protein belongs to the SAICAR synthetase family.

It catalyses the reaction 5-amino-1-(5-phospho-D-ribosyl)imidazole-4-carboxylate + L-aspartate + ATP = (2S)-2-[5-amino-1-(5-phospho-beta-D-ribosyl)imidazole-4-carboxamido]succinate + ADP + phosphate + 2 H(+). The protein operates within purine metabolism; IMP biosynthesis via de novo pathway; 5-amino-1-(5-phospho-D-ribosyl)imidazole-4-carboxamide from 5-amino-1-(5-phospho-D-ribosyl)imidazole-4-carboxylate: step 1/2. This is Phosphoribosylaminoimidazole-succinocarboxamide synthase from Shigella sonnei (strain Ss046).